The chain runs to 89 residues: Small ribosomal subunit protein uS14A (89 aa).

Belongs to the universal ribosomal protein uS14 family. As to quaternary structure, contacts proteins S3 and S10. Part of the 30S ribosomal subunit.

In terms of biological role, binds 16S rRNA, required for the assembly of 30S particles and may also be responsible for determining the conformation of the 16S rRNA at the A site. Functionally, non-essential protein. A second form of uS14, it can integrate into the 30S subunit where it partially compensates for loss of the major uS14 protein (AC P12878) in restoring 70S formation, although it does not seem to be incorporated into the ribosome as well as the major uS14. The protein is Small ribosomal subunit protein uS14A of Bacillus subtilis (strain 168).